Consider the following 474-residue polypeptide: Proline--tRNA ligase (474 aa).

This sequence belongs to the class-II aminoacyl-tRNA synthetase family. ProS type 3 subfamily. In terms of assembly, homodimer.

The protein localises to the cytoplasm. The enzyme catalyses tRNA(Pro) + L-proline + ATP = L-prolyl-tRNA(Pro) + AMP + diphosphate. In terms of biological role, catalyzes the attachment of proline to tRNA(Pro) in a two-step reaction: proline is first activated by ATP to form Pro-AMP and then transferred to the acceptor end of tRNA(Pro). The sequence is that of Proline--tRNA ligase from Aster yellows witches'-broom phytoplasma (strain AYWB).